The primary structure comprises 780 residues: Potassium/sodium hyperpolarization-activated cyclic nucleotide-gated channel 3 (780 aa).

Residues 1-47 (MEEEARPAVGDGEAATPARETPPAAPAQARAASGGVPESAPEPKRRQ) are disordered. The Cytoplasmic segment spans residues 1–96 (MEEEARPAVG…PYSDFRFYWD (96 aa)). The span at 13–32 (EAATPARETPPAAPAQARAA) shows a compositional bias: low complexity. The involved in subunit assembly stretch occupies residues 45-90 (RRQLGTLLQPTVNKFSLRVFGSHKAVEIEQERVKSAGAWIIHPYSD). The helical transmembrane segment at 97–117 (LIMLLLMVGNLIVLPVGITFF) threads the bilayer. The Extracellular segment spans residues 118-123 (KEENSP). The chain crosses the membrane as a helical span at residues 124–144 (PWIVFNVLSDTFFLLDLVLNF). Residues 145–170 (RTGIVVEEGAEILLAPRAIRTRYLRT) lie on the Cytoplasmic side of the membrane. A helical transmembrane segment spans residues 171–191 (WFLVDLISSIPVDYIFLVVEL). Residues 192–200 (EPRLDAEVY) are Extracellular-facing. The chain crosses the membrane as a helical; Voltage-sensor span at residues 201–221 (KTARALRIVRFTKILSLLRLL). Topologically, residues 222–252 (RLSRLIRYMHQWEEIFHMTYDLASAVVRIFN) are cytoplasmic. The helical transmembrane segment at 253–273 (LIGMMLLLCHWDGCLQFLVPM) threads the bilayer. Topologically, residues 274-296 (LQDFPSDCWVSMNRMVNHSWGRQ) are extracellular. Asn290 is a glycosylation site (N-linked (GlcNAc...) asparagine). Positions 297-318 (YSHALFKAMSHMLCIGYGQQAP) form an intramembrane region, pore-forming. The Extracellular portion of the chain corresponds to 319-328 (VGMPDVWLTM). A helical membrane pass occupies residues 329-349 (LSMIVGATCYAMFIGHATALI). Topologically, residues 350-780 (QSLDSSRRQY…PRGPQISANM (431 aa)) are cytoplasmic. Positions 353-780 (DSSRRQYQEK…PRGPQISANM (428 aa)) are interaction with KCTD3. 3',5'-cyclic AMP contacts are provided by Gly491, Glu492, Cys494, Arg501, Thr502, Arg542, and Arg545. A disordered region spans residues 549–569 (KNSILQRKRSEPSPGSSSGGV). Position 634 is a phosphoserine (Ser634). Positions 687–698 (ASLSRTGRSQVS) are enriched in polar residues. The segment at 687–780 (ASLSRTGRSQ…PRGPQISANM (94 aa)) is disordered.

The protein belongs to the potassium channel HCN family. In terms of assembly, homotetramer. The potassium channel is composed of a homo- or heterotetrameric complex of pore-forming subunits. Interacts with HCN1. Interacts with KCTD3; this interaction increases cell surface expression and current density of this channel. Interacts with PEX5L.

The protein localises to the cell membrane. It catalyses the reaction K(+)(in) = K(+)(out). The enzyme catalyses Na(+)(in) = Na(+)(out). Inhibited by Cs(1+) and ivabradine. Unlike HCN2 and HCN4, HCN3 is insensitive to cyclic nucleotides, such as cAMP or cGMP. This lack of sensitivity of HCN3, despite harboring a functional cyclic nucleotide-binding domain (CNBD), may be explained by its shorter C-terminal sequence, which may alter the normal autoinhibition of the channel. Phosphatidylinositol-4,5-bisphosphate (PIP(2)) shifts HCN3 activation to more depolarized potentials and accelerated activation kinetics. Functionally, hyperpolarization-activated ion channel that are permeable to sodium and potassium ions, with an about 3:1 preference for potassium ions. Contributes to the native pacemaker currents in heart (If) and in neurons (Ih). In particular, plays a pivotal role in maintaining excitability and promoting rhythmic burst firing within hypothalamic nuclei. Exerts a significant influence on the configuration of the cardiac action potential waveform. Does not appear to play a prominent role in the processing of acute, neuropathic, or inflammatory pain. The protein is Potassium/sodium hyperpolarization-activated cyclic nucleotide-gated channel 3 (Hcn3) of Rattus norvegicus (Rat).